Reading from the N-terminus, the 181-residue chain is Ferritin heavy chain (181 aa).

The residue at position 1 (methionine 1) is an N-acetylmethionine. N-acetylthreonine; in Ferritin heavy chain, N-terminally processed is present on threonine 2. The Ferritin-like diiron domain occupies 11-160; the sequence is QNYHQDSEAA…DHITNLRKMG (150 aa). Residues glutamate 28, glutamate 63, histidine 66, glutamate 108, and glutamine 142 each coordinate Fe cation. Serine 179 is subject to Phosphoserine.

It belongs to the ferritin family. Oligomer of 24 subunits. There are two types of subunits: L (light) chain and H (heavy) chain. The major chain can be light or heavy, depending on the species and tissue type. The functional molecule forms a roughly spherical shell with a diameter of 12 nm and contains a central cavity into which the insoluble mineral iron core is deposited. Interacts with NCOA4; NCOA4 promotes targeting of the iron-binding ferritin complex to autolysosomes following starvation or iron depletion.

Its subcellular location is the cytoplasm. It localises to the lysosome. The protein resides in the cytoplasmic vesicle. The protein localises to the autophagosome. The catalysed reaction is 4 Fe(2+) + O2 + 4 H(+) = 4 Fe(3+) + 2 H2O. Functionally, stores iron in a soluble, non-toxic, readily available form. Important for iron homeostasis. Has ferroxidase activity. Iron is taken up in the ferrous form and deposited as ferric hydroxides after oxidation. Also plays a role in delivery of iron to cells. Mediates iron uptake in capsule cells of the developing kidney. Delivery to lysosomes is mediated by the cargo receptor NCOA4 for autophagic degradation and release of iron. This chain is Ferritin heavy chain (FTH1), found in Bos taurus (Bovine).